Here is a 101-residue protein sequence, read N- to C-terminus: Urease subunit beta (101 aa).

It belongs to the urease beta subunit family. As to quaternary structure, heterotrimer of UreA (gamma), UreB (beta) and UreC (alpha) subunits. Three heterotrimers associate to form the active enzyme.

It localises to the cytoplasm. It catalyses the reaction urea + 2 H2O + H(+) = hydrogencarbonate + 2 NH4(+). It functions in the pathway nitrogen metabolism; urea degradation; CO(2) and NH(3) from urea (urease route): step 1/1. The protein is Urease subunit beta of Ruegeria sp. (strain TM1040) (Silicibacter sp.).